Here is a 322-residue protein sequence, read N- to C-terminus: Tyrosine recombinase XerC (322 aa).

The interval 1 to 25 (MPEAAPPVADARGSSPTATTGPGAD) is disordered. Residues 16–25 (PTATTGPGAD) show a composition bias toward low complexity. A Core-binding (CB) domain is found at 25–111 (DATLSAVEPF…ACRSYYAWLL (87 aa)). The region spanning 132–309 (KLPQVLDADE…DFQHLAKVYD (178 aa)) is the Tyr recombinase domain. Residues Arg-171, Lys-195, His-261, Arg-264, and His-287 contribute to the active site. Tyr-296 (O-(3'-phospho-DNA)-tyrosine intermediate) is an active-site residue.

The protein belongs to the 'phage' integrase family. XerC subfamily. As to quaternary structure, forms a cyclic heterotetrameric complex composed of two molecules of XerC and two molecules of XerD.

The protein resides in the cytoplasm. Site-specific tyrosine recombinase, which acts by catalyzing the cutting and rejoining of the recombining DNA molecules. The XerC-XerD complex is essential to convert dimers of the bacterial chromosome into monomers to permit their segregation at cell division. It also contributes to the segregational stability of plasmids. The chain is Tyrosine recombinase XerC from Xanthomonas campestris pv. campestris (strain 8004).